A 612-amino-acid chain; its full sequence is MIQVLLVTICLAVFPYQGSSIILGSGNVNDYEVVYPRKVTALPKGAAQPKYEDTMQYEFKVNGEPVVLHLEKNKGLFSEDYSETHYSPDGREITTYPPVEDHCYYHGRIQNDADSTASISACNGLKGHFKLQGEMYLIEPLELSDSEAHAVFKYENVEKEDEAPKMCGVTQNWESYEPIKKASQLNLTPEQQRYLNTKKYIELVIVADNVMVKKYTSNSTAIRTRIYACVNTLNLIYRAFNIHIALVGIEIWSNGDLINVTSAANVTLDLFGNWRRRVLLRHKRHDNAQLLTAIDFDGPTVGLAYGASMCDPRFATGIVQDHSKLDIMVAVTMAHELGHNLGMNHDGNQCNCGGNPCIMSATLNFEPAYQFSDCSRDEHWRYLIDNRPPCILNKPSITDIVSPPVCGNYFVEVGEECDCGLPARCQNPCCNAATCKLRPGTQCEDGECCEQCQFKGAGTECRAASSECDIAESCTGQSADCPTDDFQRNGQPCLNNNGYCYNGTCPTLDDQCISFFGSSKTVAPDVCFNLNLQGQGDFYCRRENTRIFPCAPQDKKCGRLFCVLGPTGNTISCQSTYSQSDLDIGMVDLGTKCGDGRVCNSTRQCVDVNTAY.

A signal peptide spans 1-20 (MIQVLLVTICLAVFPYQGSS). Residues 21-189 (IILGSGNVND…KKASQLNLTP (169 aa)) constitute a propeptide that is removed on maturation. A Peptidase M12B domain is found at 199–395 (KYIELVIVAD…NRPPCILNKP (197 aa)). E202 provides a ligand contact to Ca(2+). A glycan (N-linked (GlcNAc...) asparagine) is linked at N218. D286 serves as a coordination point for Ca(2+). 3 disulfides stabilise this stretch: C310-C390, C350-C374, and C352-C357. Position 335 (H335) interacts with Zn(2+). E336 is an active-site residue. H339 and H345 together coordinate Zn(2+). The Ca(2+) site is built by C390, N393, V405, N408, F410, E412, E415, and D418. The Disintegrin domain maps to 403-489 (PPVCGNYFVE…DCPTDDFQRN (87 aa)). 14 disulfides stabilise this stretch: C406–C435, C417–C430, C419–C425, C429–C452, C443–C449, C448–C474, C461–C481, C468–C500, C493–C505, C512–C562, C527–C573, C540–C550, C557–C599, and C593–C605. A D/ECD-tripeptide motif is present at residues 467–469 (ECD). N-linked (GlcNAc...) asparagine glycosylation is present at N502.

It belongs to the venom metalloproteinase (M12B) family. P-III subfamily. Requires Zn(2+) as cofactor. Expressed by the venom gland.

The protein localises to the secreted. Its function is as follows. Snake venom metalloproteinase that impairs hemostasis in the envenomed animal. The polypeptide is Zinc metalloproteinase-disintegrin-like 8 (Crotalus adamanteus (Eastern diamondback rattlesnake)).